The following is a 259-amino-acid chain: Phosphate import ATP-binding protein PstB (259 aa).

Residues 13 to 254 (IAVKNLNFFY…PTRKETEDYI (242 aa)) form the ABC transporter domain. 45 to 52 (GPSGCGKS) lines the ATP pocket.

This sequence belongs to the ABC transporter superfamily. Phosphate importer (TC 3.A.1.7) family. As to quaternary structure, the complex is composed of two ATP-binding proteins (PstB), two transmembrane proteins (PstC and PstA) and a solute-binding protein (PstS).

It is found in the cell inner membrane. It carries out the reaction phosphate(out) + ATP + H2O = ADP + 2 phosphate(in) + H(+). In terms of biological role, part of the ABC transporter complex PstSACB involved in phosphate import. Responsible for energy coupling to the transport system. The protein is Phosphate import ATP-binding protein PstB of Albidiferax ferrireducens (strain ATCC BAA-621 / DSM 15236 / T118) (Rhodoferax ferrireducens).